A 106-amino-acid chain; its full sequence is Urease subunit beta (106 aa).

The protein belongs to the urease beta subunit family. As to quaternary structure, heterotrimer of UreA (gamma), UreB (beta) and UreC (alpha) subunits. Three heterotrimers associate to form the active enzyme.

The protein localises to the cytoplasm. It carries out the reaction urea + 2 H2O + H(+) = hydrogencarbonate + 2 NH4(+). The protein operates within nitrogen metabolism; urea degradation; CO(2) and NH(3) from urea (urease route): step 1/1. The polypeptide is Urease subunit beta (Synechococcus sp. (strain CC9605)).